Reading from the N-terminus, the 532-residue chain is FRIGIDA-like protein 4a (532 aa).

The interval 406 to 432 is disordered; it reads KTEKRKPAAVPANKRTRASYNGPMPPA.

Belongs to the Frigida family. Expressed in leaves, shoot apex, flowers and during seed development.

This chain is FRIGIDA-like protein 4a (FRL4A), found in Arabidopsis thaliana (Mouse-ear cress).